The primary structure comprises 104 residues: Small ribosomal subunit protein bS18c (104 aa).

This sequence belongs to the bacterial ribosomal protein bS18 family. In terms of assembly, part of the 30S ribosomal subunit.

The protein resides in the plastid. It is found in the chloroplast. The chain is Small ribosomal subunit protein bS18c from Lotus japonicus (Lotus corniculatus var. japonicus).